A 253-amino-acid polypeptide reads, in one-letter code: 5-oxoprolinase subunit A (253 aa).

It belongs to the LamB/PxpA family. As to quaternary structure, forms a complex composed of PxpA, PxpB and PxpC.

It carries out the reaction 5-oxo-L-proline + ATP + 2 H2O = L-glutamate + ADP + phosphate + H(+). Its function is as follows. Catalyzes the cleavage of 5-oxoproline to form L-glutamate coupled to the hydrolysis of ATP to ADP and inorganic phosphate. The chain is 5-oxoprolinase subunit A from Azorhizobium caulinodans (strain ATCC 43989 / DSM 5975 / JCM 20966 / LMG 6465 / NBRC 14845 / NCIMB 13405 / ORS 571).